We begin with the raw amino-acid sequence, 185 residues long: MISAGDLRKGNTFELDGQVYTVVDFLHVKPGKGAAFVRTKLRNVLNGGLKETTFNPTEKFQEAVIERKEMQYLYTDGELYYFMDQQTFEQIPLNFEQVEGAIKFLKENMFAIIKFYKGEAFSVEAPNFVELQITHTDPGAKGNTATNVMKPATVETGAVVHVPLFINEGDSIRIDTRTGEYMERV.

It belongs to the elongation factor P family.

The protein resides in the cytoplasm. It functions in the pathway protein biosynthesis; polypeptide chain elongation. Functionally, involved in peptide bond synthesis. Stimulates efficient translation and peptide-bond synthesis on native or reconstituted 70S ribosomes in vitro. Probably functions indirectly by altering the affinity of the ribosome for aminoacyl-tRNA, thus increasing their reactivity as acceptors for peptidyl transferase. The protein is Elongation factor P of Clostridium tetani (strain Massachusetts / E88).